A 188-amino-acid polypeptide reads, in one-letter code: Apolipoprotein M (188 aa).

A signal peptide (not cleaved) is located at residues M1–Q22. Cystine bridges form between C23–C167, C95–C183, and C128–C157. N135 carries an N-linked (GlcNAc...) asparagine glycan. Residues E136 and R143 each coordinate tetradecanoate.

Belongs to the calycin superfamily. Lipocalin family. Highly divergent. As to quaternary structure, interacts with LRP2; LRP2 mediates APOM renal uptake and subsequent lysosomal degradation.

The protein resides in the secreted. In terms of biological role, probably involved in lipid transport. Can bind sphingosine-1-phosphate, myristic acid, palmitic acid and stearic acid, retinol, all-trans-retinoic acid and 9-cis-retinoic acid. The sequence is that of Apolipoprotein M (APOM) from Pongo abelii (Sumatran orangutan).